The sequence spans 297 residues: Protein AKTIP homolog (297 aa).

Residues 13–75 (FLSDLDEKSS…QRSPSGSSPE (63 aa)) form a disordered region. Over residues 17 to 42 (LDEKSSSSPHDEKKPGDGREVREEKS) the composition is skewed to basic and acidic residues. A compositionally biased stretch (polar residues) spans 59 to 75 (MNLSIARQRSPSGSSPE). Residues 84–232 (FLEYTLMAEY…VNECLRRCHN (149 aa)) form the UBC core domain.

It belongs to the ubiquitin-conjugating enzyme family. FTS subfamily.

This chain is Protein AKTIP homolog, found in Nematostella vectensis (Starlet sea anemone).